We begin with the raw amino-acid sequence, 230 residues long: Cytochrome c oxidase subunit 2 (230 aa).

The Mitochondrial intermembrane portion of the chain corresponds to 1-26 (MATPAQLGLMDAASPVMEEMIYFHDH). Residues 27 to 48 (VMLVLILITCLIFYSMLVLISS) traverse the membrane as a helical segment. Topologically, residues 49–62 (KYIYRFLTDGHVIE) are mitochondrial matrix. The helical transmembrane segment at 63-82 (TVWTVIPAIILVVVALPSLK) threads the bilayer. Residues 83–230 (LLYLTDELDN…GWCDMMLDEE (148 aa)) are Mitochondrial intermembrane-facing. Positions 161, 196, 198, 200, 204, and 207 each coordinate Cu cation. Glu198 is a binding site for Mg(2+).

It belongs to the cytochrome c oxidase subunit 2 family. Component of the cytochrome c oxidase (complex IV, CIV), a multisubunit enzyme composed of a catalytic core of 3 subunits and several supernumerary subunits. The complex exists as a monomer or a dimer and forms supercomplexes (SCs) in the inner mitochondrial membrane with ubiquinol-cytochrome c oxidoreductase (cytochrome b-c1 complex, complex III, CIII). Requires Cu cation as cofactor.

The protein resides in the mitochondrion inner membrane. The enzyme catalyses 4 Fe(II)-[cytochrome c] + O2 + 8 H(+)(in) = 4 Fe(III)-[cytochrome c] + 2 H2O + 4 H(+)(out). In terms of biological role, component of the cytochrome c oxidase, the last enzyme in the mitochondrial electron transport chain which drives oxidative phosphorylation. The respiratory chain contains 3 multisubunit complexes succinate dehydrogenase (complex II, CII), ubiquinol-cytochrome c oxidoreductase (cytochrome b-c1 complex, complex III, CIII) and cytochrome c oxidase (complex IV, CIV), that cooperate to transfer electrons derived from NADH and succinate to molecular oxygen, creating an electrochemical gradient over the inner membrane that drives transmembrane transport and the ATP synthase. Cytochrome c oxidase is the component of the respiratory chain that catalyzes the reduction of oxygen to water. Electrons originating from reduced cytochrome c in the intermembrane space (IMS) are transferred via the dinuclear copper A center (CU(A)) of subunit 2 and heme A of subunit 1 to the active site in subunit 1, a binuclear center (BNC) formed by heme A3 and copper B (CU(B)). The BNC reduces molecular oxygen to 2 water molecules using 4 electrons from cytochrome c in the IMS and 4 protons from the mitochondrial matrix. The chain is Cytochrome c oxidase subunit 2 (COII) from Branchiostoma floridae (Florida lancelet).